Reading from the N-terminus, the 583-residue chain is Inactive tyrosine-protein kinase RYK (583 aa).

Positions 1 to 18 are cleaved as a signal peptide; it reads MILRYLIFFAQLWALCLA. At 19-173 the chain is on the extracellular side; it reads NVNMFISKEE…EVDDTDSIDK (155 aa). In terms of domain architecture, WIF spans 22-147; the sequence is MFISKEEMNR…KVKLRQEKIC (126 aa). 2 N-linked (GlcNAc...) asparagine glycosylation sites follow: asparagine 30 and asparagine 46. Cysteine 113 and cysteine 147 are disulfide-bonded. Residues 174 to 194 form a helical membrane-spanning segment; the sequence is AFFVIICIAAAFLLIVAATLI. Residues 195–583 lie on the Cytoplasmic side of the membrane; it reads CYFKRSKKED…DFNIQLSQYI (389 aa). In terms of domain architecture, Protein kinase spans 281-583; sequence FQSLPLDMEG…DFNIQLSQYI (303 aa). ATP contacts are provided by residues 287-295 and lysine 327; that span reads DMEGTFGEV.

Belongs to the protein kinase superfamily. Tyr protein kinase family.

It localises to the cell membrane. Its subcellular location is the basolateral cell membrane. Has no detectable kinase activity in vitro and is unlikely to function as a tyrosine kinase in vivo. Receptor which may act as a receptor for Wnt ligand mom-2. Plays a role in controlling P7.p vulva precursor cell lineage orientation during vulva development. Regulates pop-1 asymmetric distribution in P7.p and its daughter cells. Plays a role in the migration of ALM neurons during embryogenesis. This chain is Inactive tyrosine-protein kinase RYK, found in Caenorhabditis elegans.